A 422-amino-acid chain; its full sequence is 26S proteasome non-ATPase regulatory subunit 11B (422 aa).

In terms of domain architecture, PCI spans 228 to 392 (AYSYFFEAFE…DVLIIFEEPP (165 aa)).

It belongs to the proteasome subunit S9 family. As to quaternary structure, component of the lid subcomplex of the 19S proteasome regulatory particle complex (also named PA700 complex). The 26S proteasome consists of a 20S proteasome core and two 19S regulatory subunits.

It localises to the nucleus. The protein resides in the cytoplasm. Its subcellular location is the cytosol. Component of the lid subcomplex of the 26S proteasome, a multiprotein complex involved in the ATP-dependent degradation of ubiquitinated proteins. In the complex, psmd11b is required for proteasome assembly. This is 26S proteasome non-ATPase regulatory subunit 11B (psmd11b) from Danio rerio (Zebrafish).